A 572-amino-acid chain; its full sequence is Proline--tRNA ligase (572 aa).

The protein belongs to the class-II aminoacyl-tRNA synthetase family. ProS type 1 subfamily. Homodimer.

Its subcellular location is the cytoplasm. The enzyme catalyses tRNA(Pro) + L-proline + ATP = L-prolyl-tRNA(Pro) + AMP + diphosphate. Catalyzes the attachment of proline to tRNA(Pro) in a two-step reaction: proline is first activated by ATP to form Pro-AMP and then transferred to the acceptor end of tRNA(Pro). As ProRS can inadvertently accommodate and process non-cognate amino acids such as alanine and cysteine, to avoid such errors it has two additional distinct editing activities against alanine. One activity is designated as 'pretransfer' editing and involves the tRNA(Pro)-independent hydrolysis of activated Ala-AMP. The other activity is designated 'posttransfer' editing and involves deacylation of mischarged Ala-tRNA(Pro). The misacylated Cys-tRNA(Pro) is not edited by ProRS. The sequence is that of Proline--tRNA ligase from Escherichia coli O7:K1 (strain IAI39 / ExPEC).